A 508-amino-acid chain; its full sequence is Protein disulfide-isomerase (508 aa).

An N-terminal signal peptide occupies residues 1–17 (MLRRALLCLAVAALVRA). The region spanning 18 to 134 (DAPEEEDHVL…IVNWLKKRTG (117 aa)) is the Thioredoxin 1 domain. Active-site nucleophile residues include cysteine 53 and cysteine 56. Cysteine 53 and cysteine 56 form a disulfide bridge. Lysine 200 carries the N6-acetyllysine modification. An N6-succinyllysine mark is found at lysine 222 and lysine 271. Serine 331 bears the Phosphoserine mark. A Thioredoxin 2 domain is found at 349-475 (GKIKPHLMSQ…FKKFLESGGQ (127 aa)). At serine 357 the chain carries Phosphoserine; by FAM20C. Catalysis depends on nucleophile residues cysteine 397 and cysteine 400. The cysteines at positions 397 and 400 are disulfide-linked. Serine 427 is modified (phosphoserine). The tract at residues 471–508 (ESGGQDGAGDDDDLEDLEEAEEPDMEEDDDQKAVKDEL) is disordered. The segment covering 478 to 500 (AGDDDDLEDLEEAEEPDMEEDDD) has biased composition (acidic residues). A Prevents secretion from ER motif is present at residues 505–508 (KDEL).

Belongs to the protein disulfide isomerase family. As to quaternary structure, heterodimer; heterodimerizes with the protein microsomal triglyceride transfer MTTP. Homodimer. Monomers and homotetramers may also occur. Interacts with P4HA2, forming a heterotetramer consisting of 2 alpha subunits (P4HA2) and 2 beta (P4HB), where P4HB plays the role of a structural subunit; this tetramer catalyzes the formation of 4-hydroxyproline in collagen. Also constitutes the structural subunit of the microsomal triacylglycerol transfer protein MTTP in mammalian cells. Stabilizes both enzymes and retain them in the ER without contributing to the catalytic activity. Binds UBQLN1. Interacts with ERO1B. Binds to CD4, and upon HIV-1 binding to the cell membrane, is part of a P4HB/PDI-CD4-CXCR4-gp120 complex. Interacts with ILDR2. Interacts with ERN1/IRE1A (via N-terminus); the interaction is enhanced by phosphorylation of P4HB by FAM20C in response to endoplasmic reticulum stress and results in attenuation of ERN1 activity. Post-translationally, phosphorylation of Ser-357 by FAM20C is induced by endoplasmic reticulum stress and results in a functional switch from oxidoreductase to molecular chaperone. It also promotes interaction with ERN1.

It is found in the endoplasmic reticulum. The protein resides in the endoplasmic reticulum lumen. Its subcellular location is the melanosome. It localises to the cell membrane. The enzyme catalyses Catalyzes the rearrangement of -S-S- bonds in proteins.. Functionally, this multifunctional protein catalyzes the formation, breakage and rearrangement of disulfide bonds. At the cell surface, seems to act as a reductase that cleaves disulfide bonds of proteins attached to the cell. May therefore cause structural modifications of exofacial proteins. Inside the cell, seems to form/rearrange disulfide bonds of nascent proteins. At high concentrations and following phosphorylation by FAM20C, functions as a chaperone that inhibits aggregation of misfolded proteins. At low concentrations, facilitates aggregation (anti-chaperone activity). May be involved with other chaperones in the structural modification of the TG precursor in hormone biogenesis. Also acts as a structural subunit of various enzymes such as prolyl 4-hydroxylase and microsomal triacylglycerol transfer protein MTTP. Receptor for LGALS9; the interaction retains P4HB at the cell surface of Th2 T helper cells, increasing disulfide reductase activity at the plasma membrane, altering the plasma membrane redox state and enhancing cell migration. The sequence is that of Protein disulfide-isomerase (P4HB) from Homo sapiens (Human).